A 306-amino-acid chain; its full sequence is Eukaryotic translation initiation factor 2 subunit alpha (306 aa).

An S1 motif domain is found at 17–88 (DELVVVNVRQ…EKGYIDLSKR (72 aa)). Phosphoserine is present on Ser52. The residue at position 179 (Thr179) is a Phosphothreonine. Phosphoserine is present on residues Ser273, Ser295, Ser303, and Ser305.

Belongs to the eIF-2-alpha family. In terms of assembly, eukaryotic translation initiation factor 2 eIF2 is a heterotrimeric complex composed of an alpha, a beta and a gamma subunit.

It is found in the cytoplasm. The protein localises to the cytosol. Its function is as follows. eIF-2 functions in the early steps of protein synthesis by forming a ternary complex with GTP and initiator tRNA. This complex binds to a 40S ribosomal subunit, followed by mRNA binding to form a 43S pre-initiation complex. Junction of the 60S ribosomal subunit to form the 80S initiation complex is preceded by hydrolysis of the GTP bound to eIF-2 and release of an eIF-2-GDP binary complex. In order for eIF-2 to recycle and catalyze another round of initiation, the GDP bound to eIF-2 must exchange with GTP by way of a reaction catalyzed by eIF2B. This Schizosaccharomyces pombe (strain 972 / ATCC 24843) (Fission yeast) protein is Eukaryotic translation initiation factor 2 subunit alpha (tif211).